Reading from the N-terminus, the 350-residue chain is Ion-translocating oxidoreductase complex subunit D (350 aa).

Helical transmembrane passes span 37–57, 78–109, 124–144, and 158–178; these read YYFGYGTLVQLLLAITVAYLA, ALVTASLLAVAIPPLAPWWLIVIGTLFAIVIV, AMAAYVLLLISFPVQMTSWVA, and TFNSIFQLNAGYAADFFHLAI. Position 185 is an FMN phosphoryl threonine (Thr185). The next 5 helical transmembrane spans lie at 212–232, 239–259, 264–284, 298–318, and 319–339; these read SVGEGWFWVNMAYLVGGLVML, WHISGAIVLTLFVCASIGFLI, FVSPIMHLFSGGTMLAAFFIA, LIFGAMIGLLIYLIRTFGGYP, and DAVAFAVLLANMCAPFIDYYV.

The protein belongs to the NqrB/RnfD family. In terms of assembly, the complex is composed of six subunits: RnfA, RnfB, RnfC, RnfD, RnfE and RnfG. Requires FMN as cofactor.

It is found in the cell inner membrane. Part of a membrane-bound complex that couples electron transfer with translocation of ions across the membrane. This is Ion-translocating oxidoreductase complex subunit D from Shewanella frigidimarina (strain NCIMB 400).